A 256-amino-acid polypeptide reads, in one-letter code: Ribonuclease 3-like protein 1 (256 aa).

The 147-residue stretch at A22–K168 folds into the RNase III domain. Mg(2+) is bound by residues E65, D154, and E157.

Mg(2+) is required as a cofactor. Mn(2+) serves as cofactor.

Cleaves double-stranded RNA (dsRNA). The polypeptide is Ribonuclease 3-like protein 1 (Oryza sativa subsp. japonica (Rice)).